The chain runs to 355 residues: Uroporphyrinogen decarboxylase (355 aa).

Residues 27 to 31, D78, Y155, T210, and H328 contribute to the substrate site; that span reads RQAGR.

Belongs to the uroporphyrinogen decarboxylase family. Homodimer.

It is found in the cytoplasm. It carries out the reaction uroporphyrinogen III + 4 H(+) = coproporphyrinogen III + 4 CO2. Its pathway is porphyrin-containing compound metabolism; protoporphyrin-IX biosynthesis; coproporphyrinogen-III from 5-aminolevulinate: step 4/4. Functionally, catalyzes the decarboxylation of four acetate groups of uroporphyrinogen-III to yield coproporphyrinogen-III. The polypeptide is Uroporphyrinogen decarboxylase (Pseudomonas fluorescens (strain Pf0-1)).